A 170-amino-acid polypeptide reads, in one-letter code: Lipoprotein signal peptidase (170 aa).

2 helical membrane-spanning segments follow: residues 71–91 (YFFI…ILEN) and 97–116 (AIAY…DRVF). Residues aspartate 122 and aspartate 140 contribute to the active site. A helical transmembrane segment spans residues 131 to 151 (WHWPAFNLADIAIVLGALLFV).

Belongs to the peptidase A8 family.

It is found in the cell inner membrane. The catalysed reaction is Release of signal peptides from bacterial membrane prolipoproteins. Hydrolyzes -Xaa-Yaa-Zaa-|-(S,diacylglyceryl)Cys-, in which Xaa is hydrophobic (preferably Leu), and Yaa (Ala or Ser) and Zaa (Gly or Ala) have small, neutral side chains.. It participates in protein modification; lipoprotein biosynthesis (signal peptide cleavage). Its function is as follows. This protein specifically catalyzes the removal of signal peptides from prolipoproteins. This is Lipoprotein signal peptidase from Serratia marcescens.